The following is a 1186-amino-acid chain: Pumilio homolog 1 (1186 aa).

At Ser-2 the chain carries N-acetylserine. Position 19 is a phosphoserine (Ser-19). Residues 22-73 form a disordered region; it reads LKHHPQEPANPNMPVVLTSGTGSQAQPQPAANQALAAGTHSSPVPGSIGVAG. A compositionally biased stretch (low complexity) spans 45 to 58; the sequence is QAQPQPAANQALAA. Ser-75, Ser-98, and Ser-106 each carry phosphoserine. Residue Thr-112 is modified to Phosphothreonine. Ser-124, Ser-159, Ser-197, Ser-209, and Ser-229 each carry phosphoserine. A disordered region spans residues 233–272; it reads SCLRKGGFGPRDADSDENDKGEKKNKGTFDGDKLGDLKEE. Residues 250–272 show a composition bias toward basic and acidic residues; the sequence is NDKGEKKNKGTFDGDKLGDLKEE. Position 305 is a phosphoserine (Ser-305). Residues 485–502 show a composition bias toward low complexity; sequence TNSANQQTTPQAQQGQQQ. Disordered regions lie at residues 485–524 and 613–648; these read TNSA…GQQT and AGTT…FYGN. Residues 511–524 show a composition bias toward polar residues; that stretch reads RPLTPNQNQQGQQT. Position 514 is a phosphothreonine (Thr-514). The span at 626–639 shows a compositional bias: low complexity; sequence QQPQPQPQQQPNNN. Ser-709 and Ser-714 each carry phosphoserine. Residues 742-775 form a disordered region; sequence GPVGMPLPSQGPGHSQTPPPSLSSHGSSSSLNLG. A compositionally biased stretch (low complexity) spans 763–775; sequence LSSHGSSSSLNLG. Omega-N-methylarginine is present on Arg-796. Ser-806 and Ser-822 each carry phosphoserine. The 341-residue stretch at 828–1168 folds into the PUM-HD domain; that stretch reads GRSRLLEDFR…HILAKLEKYY (341 aa). Pumilio repeat units lie at residues 848–883, 884–919, 920–955, 956–991, 992–1027, 1028–1063, 1064–1099, and 1103–1142; these read EIAG…LVFN, EILQ…ALAE, RIRG…EMVR, ELDG…FIID, AFKG…PILE, ELHQ…KIVA, EIRG…VLID, and TMND…IVMH. Residues 863–867 are adenine-nucleotide binding in RNA target; it reads SRFIQ. Positions 899-903 are uracil-nucleotide binding in RNA target; sequence NYVIQ. Residues 935–939 are adenine-nucleotide binding in RNA target; sequence CRVIQ. Positions 971 to 975 are non-specific-nucleotide binding in RNA target; that stretch reads NHVVQ. Positions 1007–1011 are adenine-nucleotide binding in RNA target; it reads CRVIQ. Positions 1043-1047 are uracil-nucleotide binding in RNA target; that stretch reads NYVIQ. Guanine-nucleotide binding in RNA target regions lie at residues 1079 to 1083 and 1080 to 1083; these read SNVVE and NVVE. The segment at 1122-1126 is uracil-nucleotide binding in RNA target; it reads NYVVQ.

Recruits the CCR4-POP2-NOT deadenylase leading to translational inhibition and mRNA degradation. Interacts with TRIM71 (via NHL repeats) in an RNA-dependent manner. Phosphorylation at Ser-714 promotes RNA-binding activity. Following growth factor stimulation phosphorylated at Ser-714, promoting binding to the 3'-UTR of CDKN1B/p27 mRNA.

It localises to the cytoplasm. It is found in the P-body. Its subcellular location is the cytoplasmic granule. In terms of biological role, sequence-specific RNA-binding protein that acts as a post-transcriptional repressor by binding the 3'-UTR of mRNA targets. Binds to an RNA consensus sequence, the Pumilio Response Element (PRE), 5'-UGUANAUA-3', that is related to the Nanos Response Element (NRE). Mediates post-transcriptional repression of transcripts via different mechanisms: acts via direct recruitment of the CCR4-POP2-NOT deadenylase leading to translational inhibition and mRNA degradation. Also mediates deadenylation-independent repression by promoting accessibility of miRNAs. Following growth factor stimulation, phosphorylated and binds to the 3'-UTR of CDKN1B/p27 mRNA, inducing a local conformational change that exposes miRNA-binding sites, promoting association of miR-221 and miR-222, efficient suppression of CDKN1B/p27 expression, and rapid entry to the cell cycle. Acts as a post-transcriptional repressor of E2F3 mRNAs by binding to its 3'-UTR and facilitating miRNA regulation. Represses a program of genes necessary to maintain genomic stability such as key mitotic, DNA repair and DNA replication factors. Its ability to repress those target mRNAs is regulated by the lncRNA NORAD (non-coding RNA activated by DNA damage) which, due to its high abundance and multitude of PUMILIO binding sites, is able to sequester a significant fraction of PUM1 and PUM2 in the cytoplasm. Involved in neuronal functions by regulating ATXN1 mRNA levels: acts by binding to the 3'-UTR of ATXN1 transcripts, leading to their down-regulation independently of the miRNA machinery. Plays a role in cytoplasmic sensing of viral infection. In testis, acts as a post-transcriptional regulator of spermatogenesis by binding to the 3'-UTR of mRNAs coding for regulators of p53/TP53. Involved in embryonic stem cell renewal by facilitating the exit from the ground state: acts by targeting mRNAs coding for naive pluripotency transcription factors and accelerates their down-regulation at the onset of differentiation. Binds specifically to miRNA MIR199A precursor, with PUM2, regulates miRNA MIR199A expression at a postranscriptional level. This chain is Pumilio homolog 1 (PUM1), found in Pongo abelii (Sumatran orangutan).